A 390-amino-acid polypeptide reads, in one-letter code: Chalcone synthase (390 aa).

C164 is a catalytic residue.

Belongs to the thiolase-like superfamily. Chalcone/stilbene synthases family.

The enzyme catalyses (E)-4-coumaroyl-CoA + 3 malonyl-CoA + 3 H(+) = 2',4,4',6'-tetrahydroxychalcone + 3 CO2 + 4 CoA. The protein operates within secondary metabolite biosynthesis; flavonoid biosynthesis. The primary product of this enzyme is 4,2',4',6'-tetrahydroxychalcone (also termed naringenin-chalcone or chalcone) which undergoes enzyme-catalyzed or spontaneous isomerization into naringenin. In Hypericum androsaemum (Tutsan), this protein is Chalcone synthase.